The chain runs to 556 residues: 2-succinyl-5-enolpyruvyl-6-hydroxy-3-cyclohexene-1-carboxylate synthase (556 aa).

It belongs to the TPP enzyme family. MenD subfamily. As to quaternary structure, homodimer. The cofactor is Mg(2+). Mn(2+) is required as a cofactor. Requires thiamine diphosphate as cofactor.

It catalyses the reaction isochorismate + 2-oxoglutarate + H(+) = 5-enolpyruvoyl-6-hydroxy-2-succinyl-cyclohex-3-ene-1-carboxylate + CO2. It functions in the pathway quinol/quinone metabolism; 1,4-dihydroxy-2-naphthoate biosynthesis; 1,4-dihydroxy-2-naphthoate from chorismate: step 2/7. The protein operates within quinol/quinone metabolism; menaquinone biosynthesis. Functionally, catalyzes the thiamine diphosphate-dependent decarboxylation of 2-oxoglutarate and the subsequent addition of the resulting succinic semialdehyde-thiamine pyrophosphate anion to isochorismate to yield 2-succinyl-5-enolpyruvyl-6-hydroxy-3-cyclohexene-1-carboxylate (SEPHCHC). The chain is 2-succinyl-5-enolpyruvyl-6-hydroxy-3-cyclohexene-1-carboxylate synthase from Salmonella arizonae (strain ATCC BAA-731 / CDC346-86 / RSK2980).